Consider the following 795-residue polypeptide: TBC1 domain family member 5 (795 aa).

Basic and acidic residues predominate over residues 1–13; the sequence is MYHSLSETRHPLQ. The interval 1–49 is disordered; that stretch reads MYHSLSETRHPLQPEEQEVGIDPLSSYSNKSGGDSNKNGRRTSSTLDSE. The span at 25–49 shows a compositional bias: polar residues; that stretch reads SSYSNKSGGDSNKNGRRTSSTLDSE. The residue at position 42 (T42) is a Phosphothreonine. A phosphoserine mark is found at S43 and S44. The interval 56–64 is required for interaction with retromer; involved in interaction with ATG8 family proteins; it reads RKEWEELFV. The short motif at 57–62 is the LIR 1 element; it reads KEWEEL. Residues 81–359 enclose the Rab-GAP TBC domain; that stretch reads LRSSRFRSIC…VVWDALFADG (279 aa). S460 bears the Phosphoserine mark. A disordered region spans residues 475–564; sequence PGSAGGPVPG…PPSSATKKDS (90 aa). Over residues 484–496 the composition is skewed to low complexity; sequence GGNSSSSSSVVIP. A phosphoserine mark is found at S522, S539, S541, S544, S554, S570, S584, and S730. Polar residues predominate over residues 523 to 542; it reads MPVQLNKGLSSKNISSSPSV. Residues 554–564 are compositionally biased toward polar residues; that stretch reads SPPSSATKKDS. A disordered region spans residues 674–795; sequence HYCSSGQGQG…GFTIVSPLDI (122 aa). Residues 727–748 show a composition bias toward polar residues; that stretch reads ARGSFSGQAQPLRTLRSTSGKS. Residues 765–776 are compositionally biased toward low complexity; it reads PASASSSNPSSS. An LIR 2 motif is present at residues 785-789; it reads SGFTI. The segment at 786–791 is required for interaction with ATG8 family proteins; it reads GFTIVS. S791 carries the phosphoserine modification.

In terms of assembly, interacts with MAP1LC3A, MAP1LC3B, MAP1LC3C, GABARAP, GABARAPL1, GABARAPL2. Interacts with VPS29 and VPS35; indicative for an association with retromer CSC subcomplex. MAP1LC3A and VPS29 compete for binding to TBC1D5. Interacts with AP2M1; indicative for an association with the AP2 complex. Interacts with ULK1 and ATG13 (phosphorylated); indicative for an association with the activated ULK1-ATG13-FIP200 complex. Interacts with ATG9A; the interactions seems to be restricted to the AP2-clathrin-associated fraction of ATG9A.

The protein localises to the endosome membrane. It is found in the cytoplasmic vesicle. It localises to the autophagosome. May act as a GTPase-activating protein (GAP) for Rab family protein(s). May act as a GAP for RAB7A. Can displace RAB7A and retromer CSC subcomplex from the endosomal membrane to the cytosol; at least retromer displacement seems to require its catalytic activity. Required for retrograde transport of cargo proteins from endosomes to the trans-Golgi network (TGN); the function seems to require its catalytic activity. Involved in regulation of autophagy. May act as a molecular switch between endosomal and autophagosomal transport and is involved in reprogramming vesicle trafficking upon autophagy induction. Involved in the trafficking of ATG9A upon activation of autophagy. May regulate the recruitment of ATG9A-AP2-containing vesicles to autophagic membranes. This chain is TBC1 domain family member 5 (TBC1D5), found in Homo sapiens (Human).